A 78-amino-acid chain; its full sequence is Small ribosomal subunit protein uS17 (78 aa).

It belongs to the universal ribosomal protein uS17 family. Part of the 30S ribosomal subunit.

One of the primary rRNA binding proteins, it binds specifically to the 5'-end of 16S ribosomal RNA. The polypeptide is Small ribosomal subunit protein uS17 (Maricaulis maris (strain MCS10) (Caulobacter maris)).